Here is a 132-residue protein sequence, read N- to C-terminus: UPF0329 protein ECU07_0050/ECU09_2020 (132 aa).

It belongs to the UPF0329 family.

This Encephalitozoon cuniculi (strain GB-M1) (Microsporidian parasite) protein is UPF0329 protein ECU07_0050/ECU09_2020.